The following is a 499-amino-acid chain: Glycerol kinase (499 aa).

Thr12 is an ADP binding site. Residues Thr12, Thr13, and Ser14 each contribute to the ATP site. Sn-glycerol 3-phosphate is bound at residue Thr12. Arg16 contributes to the ADP binding site. The sn-glycerol 3-phosphate site is built by Arg82, Glu83, Tyr134, and Asp245. Glycerol-binding residues include Arg82, Glu83, Tyr134, Asp245, and Gln246. Thr267 and Gly311 together coordinate ADP. ATP is bound by residues Thr267, Gly311, Gln315, and Gly412. ADP-binding residues include Gly412 and Asn416.

This sequence belongs to the FGGY kinase family.

The catalysed reaction is glycerol + ATP = sn-glycerol 3-phosphate + ADP + H(+). It functions in the pathway polyol metabolism; glycerol degradation via glycerol kinase pathway; sn-glycerol 3-phosphate from glycerol: step 1/1. Inhibited by fructose 1,6-bisphosphate (FBP). Its function is as follows. Key enzyme in the regulation of glycerol uptake and metabolism. Catalyzes the phosphorylation of glycerol to yield sn-glycerol 3-phosphate. The protein is Glycerol kinase of Brucella anthropi (strain ATCC 49188 / DSM 6882 / CCUG 24695 / JCM 21032 / LMG 3331 / NBRC 15819 / NCTC 12168 / Alc 37) (Ochrobactrum anthropi).